A 90-amino-acid polypeptide reads, in one-letter code: Small ribosomal subunit protein uS15c (90 aa).

The protein belongs to the universal ribosomal protein uS15 family. Part of the 30S ribosomal subunit.

It is found in the plastid. The protein localises to the chloroplast. The chain is Small ribosomal subunit protein uS15c (rps15) from Piper cenocladum (Ant piper).